The sequence spans 165 residues: Putative pre-16S rRNA nuclease (165 aa).

The protein belongs to the YqgF nuclease family.

It is found in the cytoplasm. Could be a nuclease involved in processing of the 5'-end of pre-16S rRNA. The polypeptide is Putative pre-16S rRNA nuclease (Beijerinckia indica subsp. indica (strain ATCC 9039 / DSM 1715 / NCIMB 8712)).